A 194-amino-acid polypeptide reads, in one-letter code: Aminodeoxychorismate/anthranilate synthase component 2 (194 aa).

Residues 1-194 form the Glutamine amidotransferase type-1 domain; that stretch reads MILMIDNYDS…IETYRKEVIA (194 aa). Catalysis depends on residues Cys79, His168, and Glu170.

Monomer. Heterodimer consisting of two non-identical subunits: a glutamine amidotransferase subunit (PabA) and a aminodeoxychorismate synthase subunit (PabB).

It catalyses the reaction chorismate + L-glutamine = anthranilate + pyruvate + L-glutamate + H(+). The catalysed reaction is chorismate + L-glutamine = 4-amino-4-deoxychorismate + L-glutamate. Its pathway is amino-acid biosynthesis; L-tryptophan biosynthesis; L-tryptophan from chorismate: step 1/5. The protein operates within cofactor biosynthesis; tetrahydrofolate biosynthesis; 4-aminobenzoate from chorismate: step 1/2. Functionally, part of a heterodimeric complex that catalyzes the two-step biosynthesis of 4-amino-4-deoxychorismate (ADC), a precursor of p-aminobenzoate (PABA) and tetrahydrofolate. In the first step, a glutamine amidotransferase (PabA) generates ammonia as a substrate that, along with chorismate, is used in the second step, catalyzed by aminodeoxychorismate synthase (PabB) to produce ADC. PabA converts glutamine into glutamate only in the presence of stoichiometric amounts of PabB. Also involved in the biosynthesis of anthranilate. Complements a glutamine amidotransferase-negative mutant. The protein is Aminodeoxychorismate/anthranilate synthase component 2 of Bacillus subtilis (strain 168).